A 205-amino-acid polypeptide reads, in one-letter code: Gap junction epsilon-1 protein (205 aa).

Topologically, residues 1-22 (MSLNYIKNFYEGCVKPPTVIGQ) are cytoplasmic. Residues 23-43 (FHTLFFGSVRMFFLGVLGFAV) traverse the membrane as a helical segment. Over 44–74 (YGNEALHFSCDPDKREINLFCYNQFRPITPQ) the chain is Extracellular. Intrachain disulfides connect Cys-53/Cys-161 and Cys-64/Cys-147. A helical transmembrane segment spans residues 75–95 (VFWALQLVIVLLPGAIFHLYA). At 96–111 (ACKSINQDCILQKPVY) the chain is on the cytoplasmic side. Residues 112–132 (TVIYVLSVLLRISLEVFAFWL) traverse the membrane as a helical segment. Residues 133–170 (QIHLFGFQVKPIYLCDTESLGKKPNILKCMVPEHFEKT) lie on the Extracellular side of the membrane. The helical transmembrane segment at 171-191 (IFLIAMYTFTVITMVLCVAEV) threads the bilayer. Residues 192–205 (FEIIFRRSCFLFKR) are Cytoplasmic-facing.

It belongs to the connexin family. Beta-type (group I) subfamily. As to quaternary structure, a connexon is composed of a hexamer of connexins. Highly expressed in lens, where it is mainly found in lens fibers and to a lesser extent in lens epithelium. Weakly expressed in retina. Not detected in other tissues tested.

The protein resides in the cell membrane. Mediates calcium-independent ATP release, suggesting activity as a hemichannel. Does not form functional gap junctions. May play a non-essential role in eye lens development. The protein is Gap junction epsilon-1 protein of Mus musculus (Mouse).